Reading from the N-terminus, the 68-residue chain is Alpha-conotoxin Lp1.4 (68 aa).

The first 21 residues, 1–21 (MGMRMMSIMFMLVVLATTVVS), serve as a signal peptide directing secretion. Positions 22 to 48 (FTSDRALDAMNAAASKKASRLIALAVR) are excised as a propeptide. Disulfide bonds link Cys-50–Cys-56 and Cys-51–Cys-64. Residues 52 to 54 (SHP) are ser-Xaa-Pro motif, crucial for potent interaction with nAChR. Residue Asp-65 is modified to Aspartic acid 1-amide.

Belongs to the conotoxin A superfamily. As to expression, expressed by the venom duct.

The protein resides in the secreted. Alpha-conotoxins act on postsynaptic membranes, they bind to the nicotinic acetylcholine receptors (nAChR) and thus inhibit them. This toxin inhibits mouse muscle alpha-1-beta-1-gamma-delta (CHRNA1-CHRNB1-CHRNG-CHRND), and weakly rat neuronal alpha-6/alpha-3-beta-2 (CHRNA6/CHRNA3-CHRNB2). This chain is Alpha-conotoxin Lp1.4, found in Conus leopardus (Leopard cone).